Consider the following 809-residue polypeptide: Probable disease resistance protein At5g66900 (809 aa).

The RPW8 domain occupies 1 to 150; the sequence is MNDWASLGIG…LSKRMDLLSV (150 aa). Residues 50 to 86 adopt a coiled-coil conformation; sequence PLTQKIDSMQKELDFGVKELKELRDTIERADVAVRKF. 2 NB-ARC domains span residues 153 to 280 and 339 to 438; these read PVFR…DDVW and SPDE…DMWV. 194-201 lines the ATP pocket; sequence APPGCGKT. Residues 494–515 adopt a coiled-coil conformation; the sequence is QSEFKENLERKRLNLEILENTF. 4 LRR repeats span residues 650–672, 674–696, 698–720, and 722–744; these read KLQE…ISEI, SLKT…IGNL, RLEV…TEGL, and NLRF…IGKL.

The protein belongs to the disease resistance NB-LRR family.

Probable disease resistance protein. This chain is Probable disease resistance protein At5g66900, found in Arabidopsis thaliana (Mouse-ear cress).